Here is a 340-residue protein sequence, read N- to C-terminus: Quinic acid degradation cluster protein x (340 aa).

Positions 90, 115, 117, 118, and 262 each coordinate Mg(2+). Substrate is bound at residue glutamate 90. Substrate is bound by residues 117–120 and aspartate 262; that span reads LDGT.

The protein belongs to the inositol monophosphatase superfamily.

In terms of biological role, part of the qa gene cluster that mediates the catabolism of quinic acid (QA) and as such, allows the use of QA as a sole carbon source. Its function within the pathway has not been determined yet but it probably plays a regulatory role. The qa cluster encodes 3 inducible enymes (qa-2, qa-3 and qa-4) catalyzing the first three reactions in the catabolism of quinic acid to protocatechuic acid (also known as 3,4-Dihydroxybenzoic acid). The sequence is that of Quinic acid degradation cluster protein x from Neurospora crassa (strain ATCC 24698 / 74-OR23-1A / CBS 708.71 / DSM 1257 / FGSC 987).